An 88-amino-acid chain; its full sequence is Small ribosomal subunit protein bS20 (88 aa).

A disordered region spans residues 1-20 (MPNIKSAIKRTKTNNERRAH).

It belongs to the bacterial ribosomal protein bS20 family.

In terms of biological role, binds directly to 16S ribosomal RNA. This Bacillus velezensis (strain DSM 23117 / BGSC 10A6 / LMG 26770 / FZB42) (Bacillus amyloliquefaciens subsp. plantarum) protein is Small ribosomal subunit protein bS20.